Consider the following 719-residue polypeptide: MVYQGNRITVTMLEDGIANMQYNAENESVNKFDTETNKQFAEVVNALEKADDVKGLIVTSSKGVFIAGADITEFVASFKQSEEEIKDWVININDAFNRFEDLPFPKVAAINGAALGGGCEMTLVCEYRVMSDKAIIGLPETQLGIFPGFGGTVRSTRVIGIDNALELIATGAPKKALDALKLGLVDATVAADDLQDAAIDLVKKCISGELDWKAKREEKLVAVKLNQLEQAMAFNSAKGMIFAKANPKQYPAPALAIAAIEKHVNLPRDKAIEVEAAGFAKAAKTPQAESLVGLFLSDQLVKKLAKQHSKKAHEINEAAVLGAGIMGGGIAYQAASKGLPIIMKDIKSEQLDLGMGEASKLLGKMVDRGKMTPAKMGETLSRIRPTLNYGDFAETDIVIEAVVENPNVKRAVLKEVEGLVKDDCILASNTSTISITFLAEALERPENFVGMHFFNPVHRMPLVEVIRGEKSSEEAIATTVALASKMGKVPVVVNDCPGFLVNRVLFPYFGAFDLLLKQGADFAHVDKVMEKFGWPMGPAYLIDVVGLDTGVHGAEVMAEGFPDRMKPDYKGAIELLYENKRLGQKNGVGFYKYEMDKRGKPKKVADEATYELLKTTTDSEKQTFDDQAIIDRTMLAFCNETVRCLEDNIVSTPSEADMAMIMGVGFPPFRGGPCRYIDQMGLDNYLALCEKYAHLGKAYEAPQKIRDMAAAGETFYATA.

The segment at 1–190 (MVYQGNRITV…KLGLVDATVA (190 aa)) is enoyl-CoA hydratase/isomerase. Aspartate 298 is a substrate binding site. The segment at 313-719 (HEINEAAVLG…AAGETFYATA (407 aa)) is 3-hydroxyacyl-CoA dehydrogenase. NAD(+) is bound by residues methionine 326, aspartate 345, 402–404 (VVE), lysine 409, and serine 431. The For 3-hydroxyacyl-CoA dehydrogenase activity role is filled by histidine 452. Asparagine 455 is a binding site for NAD(+). Asparagine 502 is a binding site for substrate.

It in the N-terminal section; belongs to the enoyl-CoA hydratase/isomerase family. This sequence in the C-terminal section; belongs to the 3-hydroxyacyl-CoA dehydrogenase family. In terms of assembly, heterotetramer of two alpha chains (FadB) and two beta chains (FadA).

It catalyses the reaction a (3S)-3-hydroxyacyl-CoA + NAD(+) = a 3-oxoacyl-CoA + NADH + H(+). The catalysed reaction is a (3S)-3-hydroxyacyl-CoA = a (2E)-enoyl-CoA + H2O. The enzyme catalyses a 4-saturated-(3S)-3-hydroxyacyl-CoA = a (3E)-enoyl-CoA + H2O. It carries out the reaction (3S)-3-hydroxybutanoyl-CoA = (3R)-3-hydroxybutanoyl-CoA. It catalyses the reaction a (3Z)-enoyl-CoA = a 4-saturated (2E)-enoyl-CoA. The catalysed reaction is a (3E)-enoyl-CoA = a 4-saturated (2E)-enoyl-CoA. It functions in the pathway lipid metabolism; fatty acid beta-oxidation. Functionally, involved in the aerobic and anaerobic degradation of long-chain fatty acids via beta-oxidation cycle. Catalyzes the formation of 3-oxoacyl-CoA from enoyl-CoA via L-3-hydroxyacyl-CoA. It can also use D-3-hydroxyacyl-CoA and cis-3-enoyl-CoA as substrate. This is Fatty acid oxidation complex subunit alpha from Psychrobacter arcticus (strain DSM 17307 / VKM B-2377 / 273-4).